Here is a 565-residue protein sequence, read N- to C-terminus: Glucose starvation modulator protein 1 (565 aa).

A DNA-binding region (zn(2)-C6 fungal-type) is located at residues 20–48; the sequence is CVFCHQKHLQCSNERPCKNCVKRNIAHGC. Disordered regions lie at residues 63–106 and 250–269; these read GVSG…ESSN and QVSP…NTLS. A compositionally biased stretch (polar residues) spans 82 to 93; sequence SPLSTSMSPTDS. Over residues 252 to 269 the composition is skewed to low complexity; the sequence is SPSPSNTSTSENNTNTLS.

The protein belongs to the ERT1/acuK family.

Its subcellular location is the nucleus. In terms of biological role, transcription factor which regulates nonfermentable carbon utilization. The polypeptide is Glucose starvation modulator protein 1 (GSM1) (Candida dubliniensis (strain CD36 / ATCC MYA-646 / CBS 7987 / NCPF 3949 / NRRL Y-17841) (Yeast)).